A 1181-amino-acid chain; its full sequence is WD repeat-containing protein 35 (1181 aa).

WD repeat units lie at residues 4 to 43 (YLSK…VLKL), 61 to 100 (LSMN…VWML), 105 to 143 (WIEE…IVGS), 147 to 185 (NRIW…IYDN), 193 to 241 (MKLS…IMRH), and 246 to 288 (NPVL…IVQF).

As to quaternary structure, component of the IFT complex A (IFT-A) complex. IFT-A complex is divided into a core subcomplex composed of IFT122:IFT140:WDR19 which is associated with TULP3 and a peripheral subcomplex composed of IFT43:WDR35:TTC21B. Interacts directy with IFT122, ITF43 and TTC21B. Interacts with IFT43. Interacts with CFAP61.

It localises to the cytoplasm. Its subcellular location is the cytoskeleton. It is found in the microtubule organizing center. The protein resides in the centrosome. The protein localises to the cilium axoneme. It localises to the cilium basal body. Functionally, as a component of the IFT complex A (IFT-A), a complex required for retrograde ciliary transport and entry into cilia of G protein-coupled receptors (GPCRs), it is involved in ciliogenesis and ciliary protein trafficking. May promote CASP3 activation and TNF-stimulated apoptosis. The polypeptide is WD repeat-containing protein 35 (Homo sapiens (Human)).